The primary structure comprises 659 residues: Cysteine-rich receptor-like protein kinase 5 (659 aa).

Residues 1 to 24 (MSAYTSLNFLFLLTFFIGSLRVSA) form the signal peptide. The Extracellular segment spans residues 25–279 (QLQDPTYVGH…FPPGKGKNST (255 aa)). Gnk2-homologous domains are found at residues 28 to 132 (DPTY…DRNI) and 138 to 243 (TTTT…VYPF). Asparagine 175 and asparagine 277 each carry an N-linked (GlcNAc...) asparagine glycan. The helical transmembrane segment at 280-300 (VIIIAIVVPVAISVLICVAVF) threads the bilayer. Topologically, residues 301–659 (SFHASKRAKK…AASITILAPR (359 aa)) are cytoplasmic. The 280-residue stretch at 340 to 619 (FSMCNKLGQG…QMLTTSSIAL (280 aa)) folds into the Protein kinase domain. ATP contacts are provided by residues 346 to 354 (LGQGGFGQV) and lysine 368. Phosphotyrosine is present on tyrosine 413. Aspartate 465 acts as the Proton acceptor in catalysis. A Phosphothreonine modification is found at threonine 505. Residue tyrosine 513 is modified to Phosphotyrosine.

Belongs to the protein kinase superfamily. Ser/Thr protein kinase family. CRK subfamily. Interacts with CRKIP1 (KAPP), CRKIP2 and CRKIP3, three kinase-associated type 2C proteins.

Its subcellular location is the membrane. It carries out the reaction L-seryl-[protein] + ATP = O-phospho-L-seryl-[protein] + ADP + H(+). The enzyme catalyses L-threonyl-[protein] + ATP = O-phospho-L-threonyl-[protein] + ADP + H(+). Its function is as follows. Involved in multiple distinct defense responses. May function as a disease resistance (R) protein. The protein is Cysteine-rich receptor-like protein kinase 5 (CRK5) of Arabidopsis thaliana (Mouse-ear cress).